The sequence spans 716 residues: 1,4-alpha-glucan branching enzyme GlgB (716 aa).

Residue D398 is the Nucleophile of the active site. E451 acts as the Proton donor in catalysis.

It belongs to the glycosyl hydrolase 13 family. GlgB subfamily. Monomer.

It carries out the reaction Transfers a segment of a (1-&gt;4)-alpha-D-glucan chain to a primary hydroxy group in a similar glucan chain.. It participates in glycan biosynthesis; glycogen biosynthesis. Catalyzes the formation of the alpha-1,6-glucosidic linkages in glycogen by scission of a 1,4-alpha-linked oligosaccharide from growing alpha-1,4-glucan chains and the subsequent attachment of the oligosaccharide to the alpha-1,6 position. This Nitrobacter hamburgensis (strain DSM 10229 / NCIMB 13809 / X14) protein is 1,4-alpha-glucan branching enzyme GlgB.